The primary structure comprises 277 residues: Caspase-3 (277 aa).

At methionine 1 the chain carries N-acetylmethionine. Propeptides lie at residues methionine 1–aspartate 9 and serine 10–aspartate 28. A compositionally biased stretch (polar residues) spans methionine 1–serine 10. The disordered stretch occupies residues methionine 1 to lysine 25. An N6-acetyllysine modification is found at lysine 11. The segment covering lysine 11 to isoleucine 20 has biased composition (basic and acidic residues). Serine 26 is subject to Phosphoserine. Residues histidine 121 and cysteine 163 contribute to the active site. Cysteine 163 is subject to S-nitrosocysteine; in inhibited form.

It belongs to the peptidase C14A family. Heterotetramer that consists of two anti-parallel arranged heterodimers, each one formed by a 17 kDa (p17) and a 12 kDa (p12) subunit. Interacts with BIRC6/bruce. Cleavage by granzyme B, caspase-6, caspase-8 and caspase-10 generates the two active subunits. Additional processing of the propeptides is likely due to the autocatalytic activity of the activated protease. Active heterodimers between the small subunit of caspase-7 protease and the large subunit of caspase-3 also occur and vice versa. Post-translationally, S-nitrosylated on its catalytic site cysteine in unstimulated cell lines and denitrosylated upon activation of the Fas apoptotic pathway, associated with an increase in intracellular caspase activity. Fas therefore activates caspase-3 not only by inducing the cleavage of the caspase zymogen to its active subunits, but also by stimulating the denitrosylation of its active site thiol. In terms of processing, ubiquitinated by BIRC6; this activity is inhibited by DIABLO/SMAC.

It localises to the cytoplasm. The catalysed reaction is Strict requirement for an Asp residue at positions P1 and P4. It has a preferred cleavage sequence of Asp-Xaa-Xaa-Asp-|- with a hydrophobic amino-acid residue at P2 and a hydrophilic amino-acid residue at P3, although Val or Ala are also accepted at this position.. Inhibited by BIRC6; following inhibition of BIRC6-caspase binding by DIABLO/SMAC, BIRC6 is subjected to caspase cleavage, leading to an increase in active caspases. Functionally, involved in the activation cascade of caspases responsible for apoptosis execution. At the onset of apoptosis, it proteolytically cleaves poly(ADP-ribose) polymerase PARP1 at a '216-Asp-|-Gly-217' bond. Cleaves and activates sterol regulatory element binding proteins (SREBPs) between the basic helix-loop-helix leucine zipper domain and the membrane attachment domain. Cleaves and activates caspase-6, -7 and -9 (CASP6, CASP7 and CASP9, respectively). Cleaves and inactivates interleukin-18 (IL18). Triggers cell adhesion in sympathetic neurons through RET cleavage. Cleaves IL-1 beta between an Asp and an Ala, releasing the mature cytokine which is involved in a variety of inflammatory processes. Cleaves and inhibits serine/threonine-protein kinase AKT1 in response to oxidative stress. Acts as an inhibitor of type I interferon production during virus-induced apoptosis by mediating cleavage of antiviral proteins CGAS, IRF3 and MAVS, thereby preventing cytokine overproduction. Also involved in pyroptosis by mediating cleavage and activation of gasdermin-E (GSDME). Cleaves XRCC4 and phospholipid scramblase proteins XKR4, XKR8 and XKR9, leading to promote phosphatidylserine exposure on apoptotic cell surface. Cleaves BIRC6 following inhibition of BIRC6-caspase binding by DIABLO/SMAC. The protein is Caspase-3 (CASP3) of Saimiri boliviensis boliviensis (Bolivian squirrel monkey).